Here is a 105-residue protein sequence, read N- to C-terminus: Nucleoid-associated protein PTH_0052 (105 aa).

The protein belongs to the YbaB/EbfC family. As to quaternary structure, homodimer.

The protein localises to the cytoplasm. It localises to the nucleoid. In terms of biological role, binds to DNA and alters its conformation. May be involved in regulation of gene expression, nucleoid organization and DNA protection. In Pelotomaculum thermopropionicum (strain DSM 13744 / JCM 10971 / SI), this protein is Nucleoid-associated protein PTH_0052.